A 181-amino-acid chain; its full sequence is Ribosome maturation factor RimM (181 aa).

Positions 100-177 constitute a PRC barrel domain; sequence EEGFYWMQLI…QIQVDWQLED (78 aa).

Belongs to the RimM family. As to quaternary structure, binds ribosomal protein uS19.

It is found in the cytoplasm. In terms of biological role, an accessory protein needed during the final step in the assembly of 30S ribosomal subunit, possibly for assembly of the head region. Essential for efficient processing of 16S rRNA. May be needed both before and after RbfA during the maturation of 16S rRNA. It has affinity for free ribosomal 30S subunits but not for 70S ribosomes. This is Ribosome maturation factor RimM from Hydrogenovibrio crunogenus (strain DSM 25203 / XCL-2) (Thiomicrospira crunogena).